Here is a 241-residue protein sequence, read N- to C-terminus: Probable WRKY transcription factor 63 (241 aa).

Residues 56–79 (NSPNRQPHHESSSRDMAGLVPQRS) are disordered. The WRKY DNA-binding region spans 97–165 (SPNPRLDDGF…YLGQHTCKAF (69 aa)).

This sequence belongs to the WRKY group III family.

It is found in the nucleus. Functionally, transcription factor. Interacts specifically with the W box (5'-(T)TGAC[CT]-3'), a frequently occurring elicitor-responsive cis-acting element. This Arabidopsis thaliana (Mouse-ear cress) protein is Probable WRKY transcription factor 63 (WRKY63).